The sequence spans 39 residues: Cygnin (39 aa).

Gln1 carries the post-translational modification Pyrrolidone carboxylic acid. 3 disulfide bridges follow: Cys6/Cys33, Cys12/Cys28, and Cys16/Cys32.

This sequence belongs to the transferrin family.

This is Cygnin from Cygnus atratus (Black swan).